The following is a 246-amino-acid chain: Ribonuclease PH (246 aa).

Residues Arg91 and 129–131 (GTR) contribute to the phosphate site.

This sequence belongs to the RNase PH family. Homohexameric ring arranged as a trimer of dimers.

It carries out the reaction tRNA(n+1) + phosphate = tRNA(n) + a ribonucleoside 5'-diphosphate. Its function is as follows. Phosphorolytic 3'-5' exoribonuclease that plays an important role in tRNA 3'-end maturation. Removes nucleotide residues following the 3'-CCA terminus of tRNAs; can also add nucleotides to the ends of RNA molecules by using nucleoside diphosphates as substrates, but this may not be physiologically important. Probably plays a role in initiation of 16S rRNA degradation (leading to ribosome degradation) during starvation. This Paraburkholderia phymatum (strain DSM 17167 / CIP 108236 / LMG 21445 / STM815) (Burkholderia phymatum) protein is Ribonuclease PH.